A 236-amino-acid polypeptide reads, in one-letter code: tRNA1(Val) (adenine(37)-N6)-methyltransferase (236 aa).

The protein belongs to the methyltransferase superfamily. tRNA (adenine-N(6)-)-methyltransferase family.

Its subcellular location is the cytoplasm. The enzyme catalyses adenosine(37) in tRNA1(Val) + S-adenosyl-L-methionine = N(6)-methyladenosine(37) in tRNA1(Val) + S-adenosyl-L-homocysteine + H(+). Functionally, specifically methylates the adenine in position 37 of tRNA(1)(Val) (anticodon cmo5UAC). In Actinobacillus succinogenes (strain ATCC 55618 / DSM 22257 / CCUG 43843 / 130Z), this protein is tRNA1(Val) (adenine(37)-N6)-methyltransferase.